The following is a 636-amino-acid chain: Chaperone protein HtpG (636 aa).

Residues 1–329 (MSKEHGAAAE…TEDLPLNISR (329 aa)) form an a; substrate-binding region. The tract at residues 330–550 (ETLQENALIA…DGGMTASMEK (221 aa)) is b. The segment at 551-636 (LMRVMNKDES…TGWYAEVRKL (86 aa)) is c.

The protein belongs to the heat shock protein 90 family. In terms of assembly, homodimer.

Its subcellular location is the cytoplasm. In terms of biological role, molecular chaperone. Has ATPase activity. In Oleidesulfovibrio alaskensis (strain ATCC BAA-1058 / DSM 17464 / G20) (Desulfovibrio alaskensis), this protein is Chaperone protein HtpG.